We begin with the raw amino-acid sequence, 288 residues long: Peptidyl-tRNA hydrolase, chloroplastic (288 aa).

Residues 1 to 55 (MKAVAFPAKIANLSFPSNCCSLFFRSPATFLSPALPCRKLTKGIRGLEGLMSQCL) constitute a chloroplast transit peptide. Tyr107 lines the tRNA pocket. The active-site Proton acceptor is the His112. The tRNA site is built by Phe157, Asn159, and Asn205.

The protein belongs to the PTH family. As to quaternary structure, monomer.

It localises to the plastid. It is found in the chloroplast stroma. It carries out the reaction an N-acyl-L-alpha-aminoacyl-tRNA + H2O = an N-acyl-L-amino acid + a tRNA + H(+). Its function is as follows. The natural substrate for this enzyme may be peptidyl-tRNAs which drop off the ribosome during protein synthesis. The protein is Peptidyl-tRNA hydrolase, chloroplastic of Arabidopsis thaliana (Mouse-ear cress).